The sequence spans 99 residues: Malonate decarboxylase acyl carrier protein (99 aa).

Residue Ser25 is modified to O-(phosphoribosyl dephospho-coenzyme A)serine.

It belongs to the MdcC family. Covalently binds the prosthetic group of malonate decarboxylase.

The protein localises to the cytoplasm. Subunit of malonate decarboxylase, it is an acyl carrier protein to which acetyl and malonyl thioester residues are bound via a 2'-(5''-phosphoribosyl)-3'-dephospho-CoA prosthetic group and turn over during the catalytic mechanism. The polypeptide is Malonate decarboxylase acyl carrier protein (Pseudomonas aeruginosa (strain UCBPP-PA14)).